The sequence spans 546 residues: Probable ATP-dependent RNA helicase DDX56 (546 aa).

Residues 7-35 carry the Q motif motif; the sequence is LGFEHMGLDHRLLQAVTDLGWSRPTLIQE. The 181-residue stretch at 38–218 folds into the Helicase ATP-binding domain; it reads IPLALEGKDL…ELVLHNPVTL (181 aa). ATP is bound at residue 51 to 58; the sequence is ARTGSGKT. Ser-126 is modified (phosphoserine). Phosphothreonine is present on Thr-141. The DEAD box signature appears at 166-169; the sequence is DEAD. Residues 230 to 424 form the Helicase C-terminal domain; sequence QLQQFQVVCE…PYQFHMEEIE (195 aa). Disordered regions lie at residues 323–342 and 504–546; these read PVKG…SDPE and LVHP…AAPS. A compositionally biased stretch (basic residues) spans 505–524; sequence VHPHKKRKKPLASKKAKKAK. Residue Ser-531 is modified to Phosphoserine.

This sequence belongs to the DEAD box helicase family. DDX56/DBP9 subfamily. In terms of assembly, may form homooligomeric complexes. Interacts with IRF3. Interacts with OCT4 and POU5F1.

Its subcellular location is the nucleus. The protein localises to the nucleolus. It carries out the reaction ATP + H2O = ADP + phosphate + H(+). In terms of biological role, nucleolar RNA helicase that plays a role in various biological processes including innate immunity, ribosome biogenesis or nucleolus organization. Plays an essential role in maintaining nucleolar integrity in planarian stem cells. Maintains embryonic stem cells proliferation by conventional regulation of ribosome assembly and interaction with OCT4 and POU5F1 complex. Regulates antiviral innate immunity by inhibiting the virus-triggered signaling nuclear translocation of IRF3. Mechanistically, acts by disrupting the interaction between IRF3 and importin IPO5. May play a role in later stages of the processing of the pre-ribosomal particles leading to mature 60S ribosomal subunits. Has intrinsic ATPase activity. This Bos taurus (Bovine) protein is Probable ATP-dependent RNA helicase DDX56 (DDX56).